Consider the following 570-residue polypeptide: MSQDAAIAEQTPVEHLSAVDSASHSVLSTPSNKAERDEIKAYGEGEEHEPVVEIPKRPASAYVTVSIMCIMIAFGGFVFGWDTGTISGFINQTDFIRRFGMKHKDGTNYLSKVRTGLIVSIFNIGCAIGGIILSKLGDMYGRKVGLIVVVVIYIIGIIIQIASINKWYQYFIGRIISGLGVGGIAVLSPMLISEVSPKHLRGTLVSCYQLMITAGIFLGYCTNFGTKNYSNSVQWRVPLGLCFAWALFMIGGMTFVPESPRYLAEVGKIEEAKRSIAVSNKVAVDDPSVLAEVEAVLAGVEAEKLAGNASWGELFSSKTKVLQRLIMGAMIQSLQQLTGDNYFFYYGTTIFKAVGLSDSFETSIVLGIVNFASTFVGIYVVERYGRRTCLLWGAASMTACMVVYASVGVTRLWPNGQDQPSSKGAGNCMIVFACFYIFCFATTWAPIPYVVVSETFPLRVKSKAMSIATAANWLWGFLIGFFTPFITGAINFYYGYVFMGCLVFMFFYVLLVVPETKGLTLEEVNTMWEEGVLPWKSASWVPPSRRGANYDAEEMTHDDKPLYKRMFSTK.

At 1–60 the chain is on the cytoplasmic side; the sequence is MSQDAAIAEQTPVEHLSAVDSASHSVLSTPSNKAERDEIKAYGEGEEHEPVVEIPKRPAS. Residues 61 to 81 form a helical membrane-spanning segment; the sequence is AYVTVSIMCIMIAFGGFVFGW. At 82-116 the chain is on the extracellular side; sequence DTGTISGFINQTDFIRRFGMKHKDGTNYLSKVRTG. Residue asparagine 91 is glycosylated (N-linked (GlcNAc...) asparagine). Residues 117–137 form a helical membrane-spanning segment; it reads LIVSIFNIGCAIGGIILSKLG. The Cytoplasmic portion of the chain corresponds to 138–143; that stretch reads DMYGRK. The helical transmembrane segment at 144-164 threads the bilayer; sequence VGLIVVVVIYIIGIIIQIASI. At 165 to 174 the chain is on the extracellular side; sequence NKWYQYFIGR. A helical membrane pass occupies residues 175 to 195; the sequence is IISGLGVGGIAVLSPMLISEV. The Cytoplasmic portion of the chain corresponds to 196-201; sequence SPKHLR. Residues 202–222 traverse the membrane as a helical segment; the sequence is GTLVSCYQLMITAGIFLGYCT. The Extracellular portion of the chain corresponds to 223 to 236; it reads NFGTKNYSNSVQWR. The N-linked (GlcNAc...) asparagine glycan is linked to asparagine 228. Residues 237-257 traverse the membrane as a helical segment; the sequence is VPLGLCFAWALFMIGGMTFVP. At 258–340 the chain is on the cytoplasmic side; the sequence is ESPRYLAEVG…IQSLQQLTGD (83 aa). Residues 341-357 traverse the membrane as a helical segment; the sequence is NYFFYYGTTIFKAVGLS. Over 358–363 the chain is Extracellular; that stretch reads DSFETS. The chain crosses the membrane as a helical span at residues 364 to 381; it reads IVLGIVNFASTFVGIYVV. Residues 382–388 are Cytoplasmic-facing; the sequence is ERYGRRT. A helical membrane pass occupies residues 389-409; sequence CLLWGAASMTACMVVYASVGV. The Extracellular segment spans residues 410-431; it reads TRLWPNGQDQPSSKGAGNCMIV. The chain crosses the membrane as a helical span at residues 432–452; it reads FACFYIFCFATTWAPIPYVVV. At 453–469 the chain is on the cytoplasmic side; sequence SETFPLRVKSKAMSIAT. A helical transmembrane segment spans residues 470–490; that stretch reads AANWLWGFLIGFFTPFITGAI. Position 491 (asparagine 491) is a topological domain, extracellular. A helical membrane pass occupies residues 492–512; that stretch reads FYYGYVFMGCLVFMFFYVLLV. Over 513–570 the chain is Cytoplasmic; sequence VPETKGLTLEEVNTMWEEGVLPWKSASWVPPSRRGANYDAEEMTHDDKPLYKRMFSTK. Threonine 556 carries the post-translational modification Phosphothreonine. A Glycyl lysine isopeptide (Lys-Gly) (interchain with G-Cter in ubiquitin) cross-link involves residue lysine 560.

Belongs to the major facilitator superfamily. Sugar transporter (TC 2.A.1.1) family.

Its subcellular location is the membrane. In terms of biological role, high-affinity glucose transporter. This Saccharomyces cerevisiae (strain ATCC 204508 / S288c) (Baker's yeast) protein is High-affinity hexose transporter HXT7 (HXT7).